A 201-amino-acid chain; its full sequence is MRPATPLICAFGDKHKHTYGVTPICRALAVHGVQIASRTYFADRAAAPSKRALWDTTITEILAGYYEPDAEGKRPPECLYGSLKMWAHLQRQGFRWPSATVKTIMRANGWRGVPLAAHITHHRTRPGRGPGPRPGGSAMAGFSNEPAGSGRLHLRADDVEFRLHRVRGRRLRRCDRGLGMLADQRRSVRRTRITPRPSRLT.

Residues H121–G141 form a disordered region.

This is an uncharacterized protein from Mycobacterium tuberculosis (strain ATCC 25618 / H37Rv).